Here is a 243-residue protein sequence, read N- to C-terminus: 1-(5-phosphoribosyl)-5-[(5-phosphoribosylamino)methylideneamino] imidazole-4-carboxamide isomerase (243 aa).

The Proton acceptor role is filled by D9. D131 functions as the Proton donor in the catalytic mechanism.

The protein belongs to the HisA/HisF family.

Its subcellular location is the cytoplasm. The enzyme catalyses 1-(5-phospho-beta-D-ribosyl)-5-[(5-phospho-beta-D-ribosylamino)methylideneamino]imidazole-4-carboxamide = 5-[(5-phospho-1-deoxy-D-ribulos-1-ylimino)methylamino]-1-(5-phospho-beta-D-ribosyl)imidazole-4-carboxamide. Its pathway is amino-acid biosynthesis; L-histidine biosynthesis; L-histidine from 5-phospho-alpha-D-ribose 1-diphosphate: step 4/9. The chain is 1-(5-phosphoribosyl)-5-[(5-phosphoribosylamino)methylideneamino] imidazole-4-carboxamide isomerase from Campylobacter jejuni (strain RM1221).